The sequence spans 181 residues: Alkyl hydroperoxide reductase AhpD (181 aa).

The Proton donor role is filled by C131. The cysteines at positions 131 and 134 are disulfide-linked. C134 functions as the Cysteine sulfenic acid (-SOH) intermediate in the catalytic mechanism.

Belongs to the AhpD family.

The enzyme catalyses N(6)-[(R)-dihydrolipoyl]-L-lysyl-[lipoyl-carrier protein] + a hydroperoxide = N(6)-[(R)-lipoyl]-L-lysyl-[lipoyl-carrier protein] + an alcohol + H2O. Its function is as follows. Antioxidant protein with alkyl hydroperoxidase activity. Required for the reduction of the AhpC active site cysteine residues and for the regeneration of the AhpC enzyme activity. This chain is Alkyl hydroperoxide reductase AhpD, found in Azorhizobium caulinodans (strain ATCC 43989 / DSM 5975 / JCM 20966 / LMG 6465 / NBRC 14845 / NCIMB 13405 / ORS 571).